Consider the following 445-residue polypeptide: tRNA modification GTPase MnmE (445 aa).

(6S)-5-formyl-5,6,7,8-tetrahydrofolate contacts are provided by Arg20, Glu79, and Lys119. The TrmE-type G domain maps to 215-371 (GLKLAIIGPP…ILKNIENIAE (157 aa)). A K(+)-binding site is contributed by Asn225. Residues 225–230 (NAGKSS), 244–250 (SNIAGTT), and 269–272 (DTAG) contribute to the GTP site. Ser229 is a Mg(2+) binding site. Ser244, Ile246, and Thr249 together coordinate K(+). Thr250 provides a ligand contact to Mg(2+). (6S)-5-formyl-5,6,7,8-tetrahydrofolate is bound at residue Lys445.

The protein belongs to the TRAFAC class TrmE-Era-EngA-EngB-Septin-like GTPase superfamily. TrmE GTPase family. As to quaternary structure, homodimer. Heterotetramer of two MnmE and two MnmG subunits. K(+) serves as cofactor.

It is found in the cytoplasm. Exhibits a very high intrinsic GTPase hydrolysis rate. Involved in the addition of a carboxymethylaminomethyl (cmnm) group at the wobble position (U34) of certain tRNAs, forming tRNA-cmnm(5)s(2)U34. The protein is tRNA modification GTPase MnmE of Rickettsia canadensis (strain McKiel).